A 152-amino-acid polypeptide reads, in one-letter code: MSQEIRAIVRIGDTDLDGNKQVAYALAKIRGIGIASAYAICWKLGIDPHAILGALPEDQINKLDWAVRNLHELAPAWFLNRRKDPETGRDLHLIGSELVLAAKRDVDLMKKLKSWKGVRHSLGLKVRGQRTVTTGRFGATAGVTKKKAAAGK.

This sequence belongs to the universal ribosomal protein uS13 family. Part of the 30S ribosomal subunit. Forms a loose heterodimer with protein S19. Forms two bridges to the 50S subunit in the 70S ribosome.

Its function is as follows. Located at the top of the head of the 30S subunit, it contacts several helices of the 16S rRNA. In the 70S ribosome it contacts the 23S rRNA (bridge B1a) and protein L5 of the 50S subunit (bridge B1b), connecting the 2 subunits; these bridges are implicated in subunit movement. The sequence is that of Small ribosomal subunit protein uS13 from Pyrobaculum aerophilum (strain ATCC 51768 / DSM 7523 / JCM 9630 / CIP 104966 / NBRC 100827 / IM2).